The chain runs to 293 residues: 3-hydroxybutyryl-CoA dehydrogenase (293 aa).

It belongs to the 3-hydroxyacyl-CoA dehydrogenase family.

It carries out the reaction (3S)-3-hydroxybutanoyl-CoA + NADP(+) = acetoacetyl-CoA + NADPH + H(+). It participates in lipid metabolism; butanoate metabolism. The chain is 3-hydroxybutyryl-CoA dehydrogenase (hbdA) from Bradyrhizobium diazoefficiens (strain JCM 10833 / BCRC 13528 / IAM 13628 / NBRC 14792 / USDA 110).